The following is a 55-amino-acid chain: Large ribosomal subunit protein bL33m (55 aa).

Belongs to the bacterial ribosomal protein bL33 family. As to quaternary structure, component of the mitochondrial large ribosomal subunit (mt-LSU). Mature yeast 74S mitochondrial ribosomes consist of a small (37S) and a large (54S) subunit. The 37S small subunit contains a 15S ribosomal RNA (15S mt-rRNA) and at least 32 different proteins. The 54S large subunit contains a 21S rRNA (21S mt-rRNA) and at least 45 different proteins. bL33m stabilizes the tRNA acceptor stem in the E-site.

The protein resides in the mitochondrion. Component of the mitochondrial ribosome (mitoribosome), a dedicated translation machinery responsible for the synthesis of mitochondrial genome-encoded proteins, including at least some of the essential transmembrane subunits of the mitochondrial respiratory chain. The mitoribosomes are attached to the mitochondrial inner membrane and translation products are cotranslationally integrated into the membrane. The chain is Large ribosomal subunit protein bL33m (mrpl39) from Schizosaccharomyces pombe (strain 972 / ATCC 24843) (Fission yeast).